We begin with the raw amino-acid sequence, 1431 residues long: DNA polymerase II large subunit (1431 aa).

The disordered stretch occupies residues 1388-1431; the sequence is LLENFANGYNKGKKEEMPKKQRKKEQEKSKKRKVISLDDFFSRK. Residues 1399–1415 show a composition bias toward basic and acidic residues; the sequence is GKKEEMPKKQRKKEQEK.

The protein belongs to the archaeal DNA polymerase II family. In terms of assembly, heterodimer of a large subunit and a small subunit. This protein undergoes a protein self splicing that involves a post-translational excision of the intervening region (intein) followed by peptide ligation.

The enzyme catalyses DNA(n) + a 2'-deoxyribonucleoside 5'-triphosphate = DNA(n+1) + diphosphate. It carries out the reaction Exonucleolytic cleavage in the 3'- to 5'-direction to yield nucleoside 5'-phosphates.. Possesses two activities: a DNA synthesis (polymerase) and an exonucleolytic activity that degrades single-stranded DNA in the 3'- to 5'-direction. Has a template-primer preference which is characteristic of a replicative DNA polymerase. The polypeptide is DNA polymerase II large subunit (polC) (Pyrococcus horikoshii (strain ATCC 700860 / DSM 12428 / JCM 9974 / NBRC 100139 / OT-3)).